The primary structure comprises 205 residues: Probable GTP-binding protein EngB (205 aa).

Residues Asn-25 to Lys-199 form the EngB-type G domain. Residues Gly-33–Ser-40, Gly-60–Leu-64, Asp-78–Gly-81, Thr-145–Asp-148, and Phe-178–Ser-180 each bind GTP. Mg(2+)-binding residues include Ser-40 and Thr-62.

It belongs to the TRAFAC class TrmE-Era-EngA-EngB-Septin-like GTPase superfamily. EngB GTPase family. The cofactor is Mg(2+).

Functionally, necessary for normal cell division and for the maintenance of normal septation. In Buchnera aphidicola subsp. Acyrthosiphon pisum (strain 5A), this protein is Probable GTP-binding protein EngB.